The chain runs to 63 residues: Large ribosomal subunit protein bL28 (63 aa).

The segment at methionine 1–asparagine 22 is disordered.

This sequence belongs to the bacterial ribosomal protein bL28 family.

This chain is Large ribosomal subunit protein bL28, found in Campylobacter hominis (strain ATCC BAA-381 / DSM 21671 / CCUG 45161 / LMG 19568 / NCTC 13146 / CH001A).